Consider the following 243-residue polypeptide: Thiamin pyrophosphokinase 1 (243 aa).

This sequence belongs to the thiamine pyrophosphokinase family.

The catalysed reaction is thiamine + ATP = thiamine diphosphate + AMP + H(+). It functions in the pathway cofactor biosynthesis; thiamine diphosphate biosynthesis; thiamine diphosphate from thiamine: step 1/1. Its function is as follows. Catalyzes the phosphorylation of thiamine to thiamine pyrophosphate. Functions cell non-autonomously. This chain is Thiamin pyrophosphokinase 1, found in Caenorhabditis elegans.